A 292-amino-acid polypeptide reads, in one-letter code: Phosphatidylserine decarboxylase proenzyme (292 aa).

Residues D89, H146, and S252 each act as charge relay system; for autoendoproteolytic cleavage activity in the active site. S252 serves as the catalytic Schiff-base intermediate with substrate; via pyruvic acid; for decarboxylase activity. Position 252 is a pyruvic acid (Ser); by autocatalysis (S252).

This sequence belongs to the phosphatidylserine decarboxylase family. PSD-B subfamily. Prokaryotic type I sub-subfamily. Heterodimer of a large membrane-associated beta subunit and a small pyruvoyl-containing alpha subunit. It depends on pyruvate as a cofactor. Post-translationally, is synthesized initially as an inactive proenzyme. Formation of the active enzyme involves a self-maturation process in which the active site pyruvoyl group is generated from an internal serine residue via an autocatalytic post-translational modification. Two non-identical subunits are generated from the proenzyme in this reaction, and the pyruvate is formed at the N-terminus of the alpha chain, which is derived from the carboxyl end of the proenzyme. The autoendoproteolytic cleavage occurs by a canonical serine protease mechanism, in which the side chain hydroxyl group of the serine supplies its oxygen atom to form the C-terminus of the beta chain, while the remainder of the serine residue undergoes an oxidative deamination to produce ammonia and the pyruvoyl prosthetic group on the alpha chain. During this reaction, the Ser that is part of the protease active site of the proenzyme becomes the pyruvoyl prosthetic group, which constitutes an essential element of the active site of the mature decarboxylase.

The protein resides in the cell membrane. The enzyme catalyses a 1,2-diacyl-sn-glycero-3-phospho-L-serine + H(+) = a 1,2-diacyl-sn-glycero-3-phosphoethanolamine + CO2. Its pathway is phospholipid metabolism; phosphatidylethanolamine biosynthesis; phosphatidylethanolamine from CDP-diacylglycerol: step 2/2. Functionally, catalyzes the formation of phosphatidylethanolamine (PtdEtn) from phosphatidylserine (PtdSer). This is Phosphatidylserine decarboxylase proenzyme from Shewanella sp. (strain ANA-3).